The sequence spans 451 residues: Chromosomal replication initiator protein DnaA (451 aa).

Residues 1–77 (MTENEQIFWN…EVYNAQISVD (77 aa)) form a domain I, interacts with DnaA modulators region. Positions 77-110 (DYVFEEDLMIEQNQTKINQKPKQQALNSLPTVTS) are domain II. A domain III, AAA+ region region spans residues 111–329 (DLNPKYSFEN…GALKDISLVA (219 aa)). ATP is bound by residues glycine 155, glycine 157, lysine 158, and threonine 159. The interval 330 to 451 (NFKQIDTITV…EIETIKNKIK (122 aa)) is domain IV, binds dsDNA.

The protein belongs to the DnaA family. In terms of assembly, oligomerizes as a right-handed, spiral filament on DNA at oriC.

The protein resides in the cytoplasm. Its function is as follows. Plays an essential role in the initiation and regulation of chromosomal replication. ATP-DnaA binds to the origin of replication (oriC) to initiate formation of the DNA replication initiation complex once per cell cycle. Binds the DnaA box (a 9 base pair repeat at the origin) and separates the double-stranded (ds)DNA. Forms a right-handed helical filament on oriC DNA; dsDNA binds to the exterior of the filament while single-stranded (ss)DNA is stabiized in the filament's interior. The ATP-DnaA-oriC complex binds and stabilizes one strand of the AT-rich DNA unwinding element (DUE), permitting loading of DNA polymerase. After initiation quickly degrades to an ADP-DnaA complex that is not apt for DNA replication. Binds acidic phospholipids. The chain is Chromosomal replication initiator protein DnaA from Streptococcus pyogenes serotype M4 (strain MGAS10750).